The sequence spans 27 residues: uncharacterized protein (27 aa).

Residues 6–26 (IIVLGALIALLELIRFLLQLL) traverse the membrane as a helical segment.

It belongs to the DinQ family.

It is found in the cell inner membrane. This is an uncharacterized protein from Escherichia coli (strain K12).